Reading from the N-terminus, the 315-residue chain is Olfactory receptor 2T5 (315 aa).

The Extracellular segment spans residues 1–29 (MANITRMANHTGKLDFILMGLFRRSKHPA). N-linked (GlcNAc...) asparagine glycans are attached at residues Asn-3 and Asn-9. A helical membrane pass occupies residues 30–53 (LLSVVIFVVFLKALSGNAVLILLI). The Cytoplasmic portion of the chain corresponds to 54 to 61 (HCDAHLHS). Residues 62–83 (PMYFFISQLSLMDMAYISVTVP) form a helical membrane-spanning segment. The Extracellular portion of the chain corresponds to 84-104 (KMLLDQVMGVNKVSAPECGMQ). A disulfide bridge connects residues Cys-101 and Cys-193. The helical transmembrane segment at 105–124 (MFLYLTLAGSEFFLLATMAY) threads the bilayer. At 125 to 143 (DRYVAICHPLRYPVLMNHR) the chain is on the cytoplasmic side. A helical membrane pass occupies residues 144 to 162 (VCLFLASGCWFLGSVDGFM). At 163-199 (LTPITMSFPFCRSWEIHHFFCEVPAVTILSCSDTSLY) the chain is on the extracellular side. Residues 200–223 (ETLMYLCCVLMLLIPVTIISSSYL) traverse the membrane as a helical segment. Residues 224–240 (LILLTVHRMNSAEGRKK) are Cytoplasmic-facing. Residues 241-263 (AFATCSSHLTVVILFYGAAVYTY) form a helical membrane-spanning segment. Over 264–276 (MLPSSYHTPEKDM) the chain is Extracellular. A helical membrane pass occupies residues 277-296 (MVSVFYTILTPVLNPLIYSL). The Cytoplasmic segment spans residues 297 to 315 (RNKDVMGALKKMLTVRFVL).

This sequence belongs to the G-protein coupled receptor 1 family.

The protein resides in the cell membrane. Odorant receptor. This chain is Olfactory receptor 2T5 (OR2T5), found in Homo sapiens (Human).